The sequence spans 416 residues: Tryptophan synthase beta chain (416 aa).

An N6-(pyridoxal phosphate)lysine modification is found at K109.

It belongs to the TrpB family. As to quaternary structure, tetramer of two alpha and two beta chains. Requires pyridoxal 5'-phosphate as cofactor.

The catalysed reaction is (1S,2R)-1-C-(indol-3-yl)glycerol 3-phosphate + L-serine = D-glyceraldehyde 3-phosphate + L-tryptophan + H2O. Its pathway is amino-acid biosynthesis; L-tryptophan biosynthesis; L-tryptophan from chorismate: step 5/5. The beta subunit is responsible for the synthesis of L-tryptophan from indole and L-serine. The polypeptide is Tryptophan synthase beta chain (Prochlorococcus marinus (strain SARG / CCMP1375 / SS120)).